A 481-amino-acid polypeptide reads, in one-letter code: Bifunctional protein GlmU (481 aa).

The segment at 1–235 is pyrophosphorylase; that stretch reads MTHKERPLDV…PDEVMGANDR (235 aa). UDP-N-acetyl-alpha-D-glucosamine contacts are provided by residues 13 to 16, Lys-27, Gln-78, 83 to 84, 107 to 109, Gly-146, Glu-161, Asn-176, and Asn-233; these read LAAG, GT, and YGD. Position 109 (Asp-109) interacts with Mg(2+). Position 233 (Asn-233) interacts with Mg(2+). Residues 236–256 are linker; that stretch reads VQLAQAAAVLRRRINTAHMQA. Residues 257 to 481 form an N-acetyltransferase region; that stretch reads GVTLQDPSTI…PWLAGWLERQ (225 aa). The UDP-N-acetyl-alpha-D-glucosamine site is built by Arg-339 and Lys-357. His-369 serves as the catalytic Proton acceptor. Residues Tyr-372 and Asn-383 each coordinate UDP-N-acetyl-alpha-D-glucosamine. Residues Ala-386, Ser-411, Ala-429, and Arg-446 each coordinate acetyl-CoA.

This sequence in the N-terminal section; belongs to the N-acetylglucosamine-1-phosphate uridyltransferase family. The protein in the C-terminal section; belongs to the transferase hexapeptide repeat family. As to quaternary structure, homotrimer. Mg(2+) is required as a cofactor.

Its subcellular location is the cytoplasm. It carries out the reaction alpha-D-glucosamine 1-phosphate + acetyl-CoA = N-acetyl-alpha-D-glucosamine 1-phosphate + CoA + H(+). The enzyme catalyses N-acetyl-alpha-D-glucosamine 1-phosphate + UTP + H(+) = UDP-N-acetyl-alpha-D-glucosamine + diphosphate. It participates in nucleotide-sugar biosynthesis; UDP-N-acetyl-alpha-D-glucosamine biosynthesis; N-acetyl-alpha-D-glucosamine 1-phosphate from alpha-D-glucosamine 6-phosphate (route II): step 2/2. It functions in the pathway nucleotide-sugar biosynthesis; UDP-N-acetyl-alpha-D-glucosamine biosynthesis; UDP-N-acetyl-alpha-D-glucosamine from N-acetyl-alpha-D-glucosamine 1-phosphate: step 1/1. Its pathway is bacterial outer membrane biogenesis; LPS lipid A biosynthesis. Functionally, catalyzes the last two sequential reactions in the de novo biosynthetic pathway for UDP-N-acetylglucosamine (UDP-GlcNAc). The C-terminal domain catalyzes the transfer of acetyl group from acetyl coenzyme A to glucosamine-1-phosphate (GlcN-1-P) to produce N-acetylglucosamine-1-phosphate (GlcNAc-1-P), which is converted into UDP-GlcNAc by the transfer of uridine 5-monophosphate (from uridine 5-triphosphate), a reaction catalyzed by the N-terminal domain. The protein is Bifunctional protein GlmU of Deinococcus geothermalis (strain DSM 11300 / CIP 105573 / AG-3a).